A 184-amino-acid chain; its full sequence is MYVIAGLGNPGREYEGTRHNVGFMVIDELAKKLGMNVTKLKFKSLVGEGNFKGEKIILLKPQTFMNSSGEALYDAVNFYKIPLENVIVIYDDKDLDLGKIRIRKKGSSGGHNGMNSIIYLLNSEEFPRVRIGIGKPQKDLVSHVLGKFEESEKKLIDEAVIKAADAVIDIIENGIEHAMSKFNG.

Tyr-14 is a tRNA binding site. The active-site Proton acceptor is the His-19. Positions 64, 66, and 112 each coordinate tRNA.

Belongs to the PTH family. In terms of assembly, monomer.

It localises to the cytoplasm. It catalyses the reaction an N-acyl-L-alpha-aminoacyl-tRNA + H2O = an N-acyl-L-amino acid + a tRNA + H(+). Functionally, hydrolyzes ribosome-free peptidyl-tRNAs (with 1 or more amino acids incorporated), which drop off the ribosome during protein synthesis, or as a result of ribosome stalling. Catalyzes the release of premature peptidyl moieties from peptidyl-tRNA molecules trapped in stalled 50S ribosomal subunits, and thus maintains levels of free tRNAs and 50S ribosomes. The sequence is that of Peptidyl-tRNA hydrolase from Thermoanaerobacter sp. (strain X514).